The primary structure comprises 485 residues: Probable trichothecene esterase SAT6 (485 aa).

Positions 1–23 (MPQDPNTTLQMSSSKPSLSDLSV) are disordered. The span at 9 to 23 (LQMSSSKPSLSDLSV) shows a compositional bias: low complexity. Active-site charge relay system residues include S262, D406, and H438.

It belongs to the AB hydrolase superfamily. Lipase family.

The protein operates within mycotoxin biosynthesis. In terms of biological role, probable trichothecene esterase; part of the satratoxin SC1 cluster involved in the biosynthesis of satratoxins, trichothecene mycotoxins that are associated with human food poisonings. Satratoxins are suggested to be made by products of multiple gene clusters (SC1, SC2 and SC3) that encode 21 proteins in all, including polyketide synthases, acetyltransferases, and other enzymes expected to modify the trichothecene skeleton. SC1 encodes 10 proteins, SAT1 to SAT10. The largest are SAT8, which encodes a putative polyketide synthase (PKS) with a conventional non-reducing architecture, and SAT10, a putative protein containing four ankyrin repeats and thus may be involved in protein scaffolding. The putative short-chain reductase SAT3 may assist the PKS in some capacity. SAT6 contains a secretory lipase domain and acts probably as a trichothecene esterase. SAT5 encodes a putative acetyltransferase, and so, with SAT6, may affect endogenous protection from toxicity. The probable transcription factor SAT9 may regulate the expression of the SC1 cluster. SC2 encodes proteins SAT11 to SAT16, the largest of which encodes the putative reducing PKS SAT13. SAT11 is a cytochrome P450 monooxygenase, while SAT14 and SAT16 are probable acetyltransferases. The SC2 cluster may be regulated by the transcription factor SAT15. SC3 is a small cluster that encodes 5 proteins, SAT17 to SAT21. SAT21 is a putative MFS-type transporter which may have a role in exporting secondary metabolites. The four other proteins putatively encoded in SC3 include the taurine hydroxylase-like protein SAT17, the O-methyltransferase SAT18, the acetyltransferase SAT19, and the Cys6-type zinc finger SAT20, the latter being probably involved in regulation of SC3 expression. The protein is Probable trichothecene esterase SAT6 of Stachybotrys chartarum (strain CBS 109288 / IBT 7711) (Toxic black mold).